The sequence spans 120 residues: C-C motif chemokine 23 (120 aa).

A signal peptide spans 1–21 (MKVSVAALSCLMLVTALGSQA). 3 disulfide bridges follow: Cys-54-Cys-78, Cys-55-Cys-94, and Cys-65-Cys-105.

It belongs to the intercrine beta (chemokine CC) family.

The protein resides in the secreted. Shows chemotactic activity for monocytes, resting T-lymphocytes, and neutrophils, but not for activated lymphocytes. Inhibits proliferation of myeloid progenitor cells in colony formation assays. This protein can bind heparin. Binds CCR1. The sequence is that of C-C motif chemokine 23 (CCL23) from Macaca mulatta (Rhesus macaque).